Consider the following 243-residue polypeptide: Uridylate kinase (243 aa).

An ATP-binding site is contributed by K18–G21. Residue G59 participates in UMP binding. Residues G60 and R64 each coordinate ATP. UMP contacts are provided by residues D79 and M140–T147. ATP contacts are provided by Y173 and D176.

Belongs to the UMP kinase family. In terms of assembly, homohexamer.

Its subcellular location is the cytoplasm. The catalysed reaction is UMP + ATP = UDP + ADP. Its pathway is pyrimidine metabolism; CTP biosynthesis via de novo pathway; UDP from UMP (UMPK route): step 1/1. Its activity is regulated as follows. Inhibited by UTP. In terms of biological role, catalyzes the reversible phosphorylation of UMP to UDP. The sequence is that of Uridylate kinase from Corynebacterium diphtheriae (strain ATCC 700971 / NCTC 13129 / Biotype gravis).